The chain runs to 288 residues: uncharacterized protein (288 aa).

Residues 126–136 are compositionally biased toward low complexity; sequence VAAPASTPVAP. Disordered regions lie at residues 126–227 and 258–288; these read VAAP…VTSV and KEKD…SSEE. The span at 143 to 152 shows a compositional bias: basic and acidic residues; that stretch reads RKEFKNEKWK. Basic residues predominate over residues 153–162; that stretch reads DKKKQGRRRN. Residues 180–194 show a composition bias toward acidic residues; it reads VAEECLQESSSEEGD. Over residues 278–288 the composition is skewed to basic and acidic residues; that stretch reads TLVHDRISSEE.

Belongs to the chlamydial CPn_0623/CT_504/TC_0791 family.

This is an uncharacterized protein from Chlamydia trachomatis serovar D (strain ATCC VR-885 / DSM 19411 / UW-3/Cx).